The primary structure comprises 318 residues: Probable casein kinase I homolog ECU11_1980 (318 aa).

The Protein kinase domain occupies 8–276 (YTICREIGKG…YLNSLLDKIF (269 aa)). ATP-binding positions include 14-22 (IGKGGFGKV) and Lys37. Catalysis depends on Asp129, which acts as the Proton acceptor.

The protein belongs to the protein kinase superfamily. CK1 Ser/Thr protein kinase family. Casein kinase I subfamily.

The protein localises to the nucleus. The enzyme catalyses L-seryl-[protein] + ATP = O-phospho-L-seryl-[protein] + ADP + H(+). It carries out the reaction L-threonyl-[protein] + ATP = O-phospho-L-threonyl-[protein] + ADP + H(+). In terms of biological role, involved in DNA repair. May regulate the activity of protein(s) involved in double strand break repair caused by gamma rays. The sequence is that of Probable casein kinase I homolog ECU11_1980 from Encephalitozoon cuniculi (strain GB-M1) (Microsporidian parasite).